The following is a 192-amino-acid chain: Ciliary microtubule-associated protein 3 (192 aa).

Interacts with proteins involved in ciliary transport, including ARL13B, CETN1, KIF3A, RAB6A, RAB8A, TUBB1 and TUBG1. Interacts with AURKA.

Its subcellular location is the cytoplasmic vesicle. It localises to the golgi apparatus. The protein resides in the trans-Golgi network. It is found in the cytoplasm. During primary cilia disassembly, involved in cilia disassembly. Required specifically to control cilia retraction as well as the liberation and duplication of the basal body/centrosome. May act by stimulating AURKA activity at the basal body in a cell cycle-dependent manner. In Bos taurus (Bovine), this protein is Ciliary microtubule-associated protein 3 (CIMAP3).